A 449-amino-acid polypeptide reads, in one-letter code: G-protein coupled receptor 61 (449 aa).

Residues 1–14 (MESSPIPQSSGNSS) show a composition bias toward low complexity. The disordered stretch occupies residues 1–29 (MESSPIPQSSGNSSTLGRALQTPGPSTAS). The Extracellular portion of the chain corresponds to 1 to 44 (MESSPIPQSSGNSSTLGRALQTPGPSTASGVPELGLRDVASESV). Asn-12 carries an N-linked (GlcNAc...) asparagine glycan. A helical transmembrane segment spans residues 45 to 67 (ALFFMLLLDLTAVAGNAAVMAVI). At 68–75 (AKTPALRK) the chain is on the cytoplasmic side. Residues 76–98 (FVFVFHLCLVDLLAALTLMPLAM) traverse the membrane as a helical segment. The Extracellular portion of the chain corresponds to 99–112 (LSSSALFDHALFGE). The helical transmembrane segment at 113 to 135 (VACRLYLFLSVCFVSLAILSVSA) threads the bilayer. At 136–155 (INVERYYYVVHPMRYEVRMT) the chain is on the cytoplasmic side. The helical transmembrane segment at 156–178 (LGLVASVLVGVWVKALAMASVPV) threads the bilayer. Topologically, residues 179-206 (LGRVYWEEGAPSVNPGCSLQWSHSAYCQ) are extracellular. A helical membrane pass occupies residues 207 to 229 (LFVVVFAVLYFLLPLILIFVVYC). Residues 230-287 (SMFRVARVAAMQHGPLPTWMETPRQRSESLSSRSTMVTSSGAHQTTPHRTFGGGKAAV) lie on the Cytoplasmic side of the membrane. Residues 288-310 (VLLAVGGQFLLCWLPYFSFHLYV) form a helical membrane-spanning segment. The Extracellular segment spans residues 311–324 (ALSAQPISAGQVEN). A helical transmembrane segment spans residues 325–344 (VVTWIGYFCFTSNPFFYGCL). Residues 345-449 (NRQIRGELSK…RPAPSPRLES (105 aa)) are Cytoplasmic-facing.

It belongs to the G-protein coupled receptor 1 family. Forms heterodimer with MTNR1B. Interacts with ARRB1 and ARRB2 in a spontaneous and agonist-independent manner; leading to the internalization of GPR61 in the endosomal compartment. As to expression, predominantly expressed in the brain and testes, with relatively lower expression observed in the eye, adrenal gland and pituitary gland.

Its subcellular location is the cell membrane. It is found in the endosome membrane. Functionally, orphan G-protein coupled receptor. Constitutively activates the G(s)-alpha/cAMP signaling pathway. Shows a reciprocal regulatory interaction with the melatonin receptor MTNR1B most likely through receptor heteromerization. May be involved in the regulation of food intake and body weight. This is G-protein coupled receptor 61 (Gpr61) from Mus musculus (Mouse).